A 154-amino-acid polypeptide reads, in one-letter code: Myoglobin (154 aa).

Residues 2–148 enclose the Globin domain; the sequence is ELSDQEWKHV…FRNDMASKYK (147 aa). His-65 serves as a coordination point for nitrite. Residue His-65 coordinates O2. His-94 contacts heme b.

Belongs to the globin family. As to quaternary structure, monomeric.

The protein localises to the cytoplasm. The protein resides in the sarcoplasm. The enzyme catalyses Fe(III)-heme b-[protein] + nitric oxide + H2O = Fe(II)-heme b-[protein] + nitrite + 2 H(+). It carries out the reaction H2O2 + AH2 = A + 2 H2O. Functionally, monomeric heme protein which primary function is to store oxygen and facilitate its diffusion within muscle tissues. Reversibly binds oxygen through a pentacoordinated heme iron and enables its timely and efficient release as needed during periods of heightened demand. Depending on the oxidative conditions of tissues and cells, and in addition to its ability to bind oxygen, it also has a nitrite reductase activity whereby it regulates the production of bioactive nitric oxide. Under stress conditions, like hypoxia and anoxia, it also protects cells against reactive oxygen species thanks to its pseudoperoxidase activity. The polypeptide is Myoglobin (MB) (Alligator mississippiensis (American alligator)).